Consider the following 486-residue polypeptide: Cysteine--tRNA ligase (486 aa).

Zn(2+) is bound at residue Cys29. The short motif at 31-41 (VTVYDYCHLGH) is the 'HIGH' region element. Zn(2+) is bound by residues Cys214, His239, and Glu243. Positions 271–275 (KMSKS) match the 'KMSKS' region motif. Lys274 is an ATP binding site.

Belongs to the class-I aminoacyl-tRNA synthetase family. As to quaternary structure, monomer. Requires Zn(2+) as cofactor.

It is found in the cytoplasm. It catalyses the reaction tRNA(Cys) + L-cysteine + ATP = L-cysteinyl-tRNA(Cys) + AMP + diphosphate. The polypeptide is Cysteine--tRNA ligase (Trichormus variabilis (strain ATCC 29413 / PCC 7937) (Anabaena variabilis)).